The primary structure comprises 338 residues: Fructose-1,6-bisphosphatase 1 (338 aa).

Threonine 2 is modified (N-acetylthreonine). AMP-binding positions include 18–22 (VMEEG) and 28–32 (TGEMT). 2 residues coordinate Mg(2+): aspartate 69 and glutamate 98. 113 to 114 (KY) serves as a coordination point for AMP. Residues aspartate 119, leucine 121, and aspartate 122 each contribute to the Mg(2+) site. 122–125 (DGSS) contributes to the substrate binding site. Residue arginine 141 participates in AMP binding. Lysine 151 carries the N6-succinyllysine modification. Serine 208 carries the post-translational modification Phosphoserine; by PKA. Residues 213 to 216 (NEGY), 244 to 249 (RYVGSM), tyrosine 265, and 275 to 277 (KLR) contribute to the substrate site. 3 positions are modified to phosphotyrosine: tyrosine 216, tyrosine 245, and tyrosine 265. Glutamate 281 lines the Mg(2+) pocket.

This sequence belongs to the FBPase class 1 family. Homotetramer. Mg(2+) is required as a cofactor.

The enzyme catalyses beta-D-fructose 1,6-bisphosphate + H2O = beta-D-fructose 6-phosphate + phosphate. Its pathway is carbohydrate biosynthesis; gluconeogenesis. Its activity is regulated as follows. Subject to complex allosteric regulation. The enzyme can assume an active R-state, or an inactive T-state. Intermediate conformations may exist. AMP acts as an allosteric inhibitor. AMP binding affects the turnover of bound substrate and not the affinity for substrate. Fructose 2,6-bisphosphate acts as a competitive inhibitor. Fructose 2,6-bisphosphate and AMP have synergistic effects. Catalyzes the hydrolysis of fructose 1,6-bisphosphate to fructose 6-phosphate in the presence of divalent cations, acting as a rate-limiting enzyme in gluconeogenesis. Plays a role in regulating glucose sensing and insulin secretion of pancreatic beta-cells. Appears to modulate glycerol gluconeogenesis in liver. Important regulator of appetite and adiposity; increased expression of the protein in liver after nutrient excess increases circulating satiety hormones and reduces appetite-stimulating neuropeptides and thus seems to provide a feedback mechanism to limit weight gain. The protein is Fructose-1,6-bisphosphatase 1 (FBP1) of Sus scrofa (Pig).